We begin with the raw amino-acid sequence, 419 residues long: Ubiquitin receptor RAD23c (419 aa).

One can recognise a Ubiquitin-like domain in the interval 1–79 (MKIFVKTLKG…IVIMMNKSKP (79 aa)). Residues 83–118 (AASSASAGTSQAKSIPPSTSQPSISPQTPASVSAPV) are compositionally biased toward low complexity. The interval 83–172 (AASSASAGTS…DSAPVGSQGD (90 aa)) is disordered. Pro residues predominate over residues 119–135 (APAPTRPPPPAPTPTPA). Over residues 136-146 (PVAATETVTTP) the composition is skewed to low complexity. The UBA 1 domain occupies 185–228 (SNLESTIQQILDMGGGTWDRETVVLALRAAFNNPERAVEYLYTG). Positions 235–282 (VPPVARPPASAGQPANPPAQTQQPAAAPASGPNANPLDLFPQGLPNVG) are disordered. A compositionally biased stretch (low complexity) spans 245 to 270 (AGQPANPPAQTQQPAAAPASGPNANP). The region spanning 288-331 (GTLDFLRNSQQFQALRAMVQANPQVLQPMLQELGKQNPNLMRLI) is the STI1 domain. Residues 372 to 413 (THEEREAIERLEAMGFERALVLEVFFACNKNEELAANYLLDH) form the UBA 2 domain.

It belongs to the RAD23 family. As to quaternary structure, interacts with 'Lys-48'-linked polyubiquitin chains via its both UBA domains. Interacts with RPN10 via its ubiquitin-like domain. As to expression, widely expressed in the whole plant.

It is found in the nucleus. The protein localises to the cytoplasm. Its function is as follows. May be involved in nucleotide excision repair. Binds and presumably selects ubiquitin-conjugates for destruction. Prefers multiubiquitin chains rather than single ubiquitins, with a binding affinity for 'Lys-48'-linked ubiquitin chains. Acts as a ubiquitin receptor that associates with the 26S proteasomal docking subunit RPN10 for the indirect recognition of ubiquitinated substrates of ubiquitin/26S proteasome-mediated proteolysis (UPP). Involved in UV tolerance in hypocotyls, specifically in dark conditions. This Arabidopsis thaliana (Mouse-ear cress) protein is Ubiquitin receptor RAD23c.